A 64-amino-acid polypeptide reads, in one-letter code: Large ribosomal subunit protein bL35c (64 aa).

It belongs to the bacterial ribosomal protein bL35 family.

The protein resides in the plastid. Its subcellular location is the chloroplast. The sequence is that of Large ribosomal subunit protein bL35c from Thalassiosira pseudonana (Marine diatom).